Consider the following 367-residue polypeptide: S-adenosylmethionine decarboxylase proenzyme 3 (367 aa).

Residues glutamate 9 and glutamate 12 contribute to the active site. Residue serine 69 is the Schiff-base intermediate with substrate; via pyruvic acid of the active site. At serine 69 the chain carries Pyruvic acid (Ser); by autocatalysis. The active-site Proton donor; for catalytic activity is cysteine 83. Active-site proton acceptor; for processing activity residues include serine 234 and histidine 247.

The protein belongs to the eukaryotic AdoMetDC family. It depends on pyruvate as a cofactor. Is synthesized initially as an inactive proenzyme. Formation of the active enzyme involves a self-maturation process in which the active site pyruvoyl group is generated from an internal serine residue via an autocatalytic post-translational modification. Two non-identical subunits are generated from the proenzyme in this reaction, and the pyruvate is formed at the N-terminus of the alpha chain, which is derived from the carboxyl end of the proenzyme. The post-translation cleavage follows an unusual pathway, termed non-hydrolytic serinolysis, in which the side chain hydroxyl group of the serine supplies its oxygen atom to form the C-terminus of the beta chain, while the remainder of the serine residue undergoes an oxidative deamination to produce ammonia and the pyruvoyl group blocking the N-terminus of the alpha chain.

The catalysed reaction is S-adenosyl-L-methionine + H(+) = S-adenosyl 3-(methylsulfanyl)propylamine + CO2. It participates in amine and polyamine biosynthesis; S-adenosylmethioninamine biosynthesis; S-adenosylmethioninamine from S-adenosyl-L-methionine: step 1/1. The chain is S-adenosylmethionine decarboxylase proenzyme 3 (SAMDC3) from Brassica juncea (Indian mustard).